Consider the following 514-residue polypeptide: Voltage-gated potassium channel regulatory subunit KCNG1 (514 aa).

Topologically, residues 1-224 (MTLLPGDNSD…DMVEKPHSGL (224 aa)) are cytoplasmic. Residues 181-196 (EREDEEEALDSEDQES) show a composition bias toward acidic residues. The segment at 181–205 (EREDEEEALDSEDQESEGPSTSEGR) is disordered. Residues 225-246 (PGKVFACLSVLFVTVTAVNLSV) traverse the membrane as a helical segment. The Extracellular segment spans residues 247–267 (STLPSLREEEEQGQCSQMCHN). A helical membrane pass occupies residues 268–289 (VFIVESVCVGWFSLEFLLRFIQ). The Cytoplasmic segment spans residues 290–300 (APSKFAFLRSP). Residues 301-321 (LTLIDLVAILPYYVTLLVDGA) form a helical membrane-spanning segment. Topologically, residues 322 to 338 (ASSRRKPSTGNSYLDKV) are extracellular. Residues 339 to 359 (GLVLRVLRALRILYVMRLARH) traverse the membrane as a helical; Voltage-sensor segment. The Cytoplasmic portion of the chain corresponds to 360-374 (SLGLQTLGLTARRCT). Residues 375-396 (REFGLLLLFLCVAIALFAPLLY) traverse the membrane as a helical segment. Over 397–411 (VIENEMADSPEFTSI) the chain is Extracellular. The helical intramembrane region spans 412–423 (PACYWWAVITMT). Positions 424-429 (TVGYGD) match the Selectivity filter motif. Residues 424–431 (TVGYGDMV) lie within the membrane without spanning it. Residues 432–438 (PRSTPGQ) lie on the Extracellular side of the membrane. A helical transmembrane segment spans residues 439-467 (VVALSSILSGILLMAFPVTSIFHTFSRSY). At 468–514 (LELKQEQERVLIRRAQYLIKTKSQLSGMSQDSDILFGSASSDTRDNN) the chain is on the cytoplasmic side.

Belongs to the potassium channel family. G (TC 1.A.1.2) subfamily. Kv6.1/KCNG1 sub-subfamily. Heterotetramer with KCNB1 or KCNB2.

It localises to the cell membrane. In terms of biological role, regulatory alpha-subunit of the voltage-gated potassium (Kv) channel which, when coassembled with KCNB1 or KCNB2, can modulate their expression and their gating kinetics by acting on deactivation upon repolarization and inactivation during maintained depolarization. Potassium channel subunit that does not form functional channels by itself. The sequence is that of Voltage-gated potassium channel regulatory subunit KCNG1 from Rattus norvegicus (Rat).